The sequence spans 787 residues: Protein smoothened (787 aa).

A signal peptide spans 1 to 27 (MAAARPARGPELPLLGLLLLLLLGDPG). The Extracellular portion of the chain corresponds to 28 to 233 (RGAASSGNAT…EAEHQDMHSY (206 aa)). Residues 30-60 (AASSGNATGPGPRSAGGSARRSAAVTGPPPP) form a disordered region. Asn35 carries an N-linked (GlcNAc...) asparagine glycan. Positions 38-53 (GPGPRSAGGSARRSAA) are enriched in low complexity. 5 disulfide bridges follow: Cys64–Cys178, Cys70–Cys134, Cys78–Cys127, Cys118–Cys154, and Cys147–Cys169. Residues 65-181 (GRAAPCEPLR…DRFPEGCTNE (117 aa)) form the FZ domain. Asp95 contributes to the cholesterol binding site. Residue Asn188 is glycosylated (N-linked (GlcNAc...) asparagine). 2 cysteine pairs are disulfide-bonded: Cys193/Cys213 and Cys217/Cys295. The chain crosses the membrane as a helical span at residues 234-254 (IAAFGAVTGLCTLFTLATFVA). Topologically, residues 255–262 (DWRNSNRY) are cytoplasmic. Residues 263–283 (PAVILFYVNACFFVGSIGWLA) form a helical membrane-spanning segment. The Extracellular segment spans residues 284–314 (QFMDGARREIVCRADGTMRLGEPTSNETLSC). An N-linked (GlcNAc...) asparagine glycan is attached at Asn309. Cysteines 314 and 390 form a disulfide. The chain crosses the membrane as a helical span at residues 315 to 335 (VIIFVIVYYALMAGVVWFVVL). Residues 336–358 (TYAWHTSFKALGTTYQPLSGKTS) are Cytoplasmic-facing. The helical transmembrane segment at 359–379 (YFHLLTWSLPFVLTVAILAVA) threads the bilayer. At 380-402 (QVDGDSVSGICFVGYKNYRYRAG) the chain is on the extracellular side. Tyr394 serves as a coordination point for cholesterol. Residues 403-423 (FVLAPIGLVLIVGGYFLIRGV) traverse the membrane as a helical segment. Residues 424–451 (MTLFSIKSNHPGLLSEKAASKINETMLR) are Cytoplasmic-facing. A helical membrane pass occupies residues 452 to 472 (LGIFGFLAFGFVLITFSCHFY). Topologically, residues 473–524 (DFFNQAEWERSFRDYVLCQANVTIGLPTKQPIPDCEIKNRPSLLVEKINLFA) are extracellular. A disulfide bond links Cys490 and Cys507. Residues 525-545 (MFGTGIAMSTWVWTKATLLIW) form a helical membrane-spanning segment. Positions 538–569 (TKATLLIWRRTWCRLTGQSDDEPKRIKKSKMI) are interaction with BBS5 and BBS7. Residues 546-787 (RRTWCRLTGQ…TELMDADSDF (242 aa)) are Cytoplasmic-facing. Phosphoserine is present on residues Ser556, Ser574, and Ser590. The segment at 570–653 (AKAFSKRHEL…TPVPPEEQAN (84 aa)) is required for interaction with PRKACA. The tract at residues 581-593 (QNPGQELSFSMHT) is interaction with DLG5. Thr593 is modified (phosphothreonine). Residues Ser595 and Ser638 each carry the phosphoserine modification. Phosphothreonine is present on residues Thr640 and Thr644. Residue Ser662 is modified to Phosphoserine. Positions 667–704 (KRLGRKKKRRKRKKEVCPLAPPPELHPPAPAPSTIPRL) are disordered. Residues 668–680 (RLGRKKKRRKRKK) are compositionally biased toward basic residues. Residues 685–699 (LAPPPELHPPAPAPS) are compositionally biased toward pro residues.

Belongs to the G-protein coupled receptor Fz/Smo family. As to quaternary structure, homodimer. Interacts (via C-terminus) with protein kinase A catalytic subunit PRKACA; interacts with free PRKACA subunits and the interaction leads to sequestration of PRKACA at the membrane, preventing PRKACA-mediated phosphorylation of GLI transcription factors. Interacts with ARRB2. Interacts with KIF7. Interacts with BBS5 and BBS7; the interactions are indicative for the association of SMO with the BBsome complex to facilitate ciliary localization of SMO. Interacts with DLG5 and SDCBP. Interacts with GAS8/DRC4. Phosphorylation by GRK kinases is required for interaction with protein kinase A catalytic subunit PRKACA.

It localises to the cell membrane. The protein localises to the cell projection. It is found in the cilium. Its function is as follows. G protein-coupled receptor which associates with the patched protein (PTCH) to transduce hedgehog protein signaling. Binding of sonic hedgehog (SHH) to its receptor patched prevents inhibition of smoothened (SMO) by patched. When active, SMO binds to and sequesters protein kinase A catalytic subunit PRKACA at the cell membrane, preventing PRKACA-mediated phosphorylation of GLI transcription factors which releases the GLI proteins from PRKACA-mediated inhibition and allows for transcriptional activation of hedgehog pathway target genes. Required for the accumulation of KIF7, GLI2 and GLI3 in the cilia. Interacts with DLG5 at the ciliary base to induce the accumulation of KIF7 and GLI2 at the ciliary tip for GLI2 activation. The chain is Protein smoothened (SMO) from Homo sapiens (Human).